A 120-amino-acid polypeptide reads, in one-letter code: Chaperonin GroEL (120 aa).

23 to 27 (DGTTT) provides a ligand contact to ATP.

Belongs to the chaperonin (HSP60) family. As to quaternary structure, forms a cylinder of 14 subunits composed of two heptameric rings stacked back-to-back. Interacts with the co-chaperonin GroES.

The protein resides in the cytoplasm. The catalysed reaction is ATP + H2O + a folded polypeptide = ADP + phosphate + an unfolded polypeptide.. In terms of biological role, together with its co-chaperonin GroES, plays an essential role in assisting protein folding. The GroEL-GroES system forms a nano-cage that allows encapsulation of the non-native substrate proteins and provides a physical environment optimized to promote and accelerate protein folding. The protein is Chaperonin GroEL of Mycolicibacterium pulveris (Mycobacterium pulveris).